The primary structure comprises 216 residues: U1 small nuclear ribonucleoprotein C (216 aa).

The segment at 4 to 36 (FFCDYCDVYLTHDSMSVRKAHNAGRNHLRNVVE) adopts a Matrin-type zinc-finger fold. 3 stretches are compositionally biased toward pro residues: residues 68-80 (AMAP…PPFG), 87-198 (QLPP…PAPP), and 206-216 (PGPPPGLSEKR). The disordered stretch occupies residues 68 to 216 (AMAPPGAFPP…GPPPGLSEKR (149 aa)).

This sequence belongs to the U1 small nuclear ribonucleoprotein C family. U1 snRNP is composed of the 7 core Sm proteins B/B', D1, D2, D3, E, F and G that assemble in a heptameric protein ring on the Sm site of the small nuclear RNA to form the core snRNP, and at least 3 U1 snRNP-specific proteins U1-70K, U1-A and U1-C. U1-C interacts with U1 snRNA and the 5' splice-site region of the pre-mRNA.

The protein localises to the nucleus. In terms of biological role, component of the spliceosomal U1 snRNP, which is essential for recognition of the pre-mRNA 5' splice-site and the subsequent assembly of the spliceosome. U1-C is directly involved in initial 5' splice-site recognition for both constitutive and regulated alternative splicing. The interaction with the 5' splice-site seems to precede base-pairing between the pre-mRNA and the U1 snRNA. Stimulates commitment or early (E) complex formation by stabilizing the base pairing of the 5' end of the U1 snRNA and the 5' splice-site region. This chain is U1 small nuclear ribonucleoprotein C, found in Aspergillus fumigatus (strain ATCC MYA-4609 / CBS 101355 / FGSC A1100 / Af293) (Neosartorya fumigata).